The primary structure comprises 223 residues: Pyridoxal phosphate homeostasis protein (223 aa).

N6-(pyridoxal phosphate)lysine is present on Lys36.

It belongs to the pyridoxal phosphate-binding protein YggS/PROSC family. As to quaternary structure, monomer.

Its function is as follows. Pyridoxal 5'-phosphate (PLP)-binding protein, which is involved in PLP homeostasis. This chain is Pyridoxal phosphate homeostasis protein, found in Buchnera aphidicola subsp. Baizongia pistaciae (strain Bp).